We begin with the raw amino-acid sequence, 418 residues long: Serine hydroxymethyltransferase (418 aa).

(6S)-5,6,7,8-tetrahydrofolate-binding positions include L121 and 125–127 (GHL). At K230 the chain carries N6-(pyridoxal phosphate)lysine. Position 355 to 357 (355 to 357 (SPF)) interacts with (6S)-5,6,7,8-tetrahydrofolate.

The protein belongs to the SHMT family. Homodimer. Pyridoxal 5'-phosphate serves as cofactor.

Its subcellular location is the cytoplasm. It catalyses the reaction (6R)-5,10-methylene-5,6,7,8-tetrahydrofolate + glycine + H2O = (6S)-5,6,7,8-tetrahydrofolate + L-serine. The protein operates within one-carbon metabolism; tetrahydrofolate interconversion. It functions in the pathway amino-acid biosynthesis; glycine biosynthesis; glycine from L-serine: step 1/1. Its function is as follows. Catalyzes the reversible interconversion of serine and glycine with tetrahydrofolate (THF) serving as the one-carbon carrier. This reaction serves as the major source of one-carbon groups required for the biosynthesis of purines, thymidylate, methionine, and other important biomolecules. Also exhibits THF-independent aldolase activity toward beta-hydroxyamino acids, producing glycine and aldehydes, via a retro-aldol mechanism. The polypeptide is Serine hydroxymethyltransferase (Streptococcus pyogenes serotype M1).